Reading from the N-terminus, the 1021-residue chain is DNA-directed RNA polymerase 2B, chloroplastic/mitochondrial (1021 aa).

The disordered stretch occupies residues 315–337; it reads KKQKAEKDKQKEDGEHVTQEQEK. Residues aspartate 722, lysine 797, and aspartate 954 contribute to the active site.

The protein belongs to the phage and mitochondrial RNA polymerase family.

It is found in the plastid. It localises to the chloroplast. Its subcellular location is the mitochondrion. The enzyme catalyses RNA(n) + a ribonucleoside 5'-triphosphate = RNA(n+1) + diphosphate. Its function is as follows. DNA-dependent RNA polymerase catalyzes the transcription of DNA into RNA using the four ribonucleoside triphosphates as substrates. The sequence is that of DNA-directed RNA polymerase 2B, chloroplastic/mitochondrial (RPOT2-TOM) from Nicotiana tabacum (Common tobacco).